The sequence spans 736 residues: Phosphoribosylformylglycinamidine synthase subunit PurL (736 aa).

H48 is an active-site residue. ATP-binding residues include Y51 and K90. E92 contributes to the Mg(2+) binding site. Residues 93–96 and R115 each bind substrate; that span reads SHNH. H94 (proton acceptor) is an active-site residue. A Mg(2+)-binding site is contributed by D116. Q239 is a binding site for substrate. A Mg(2+)-binding site is contributed by D267. 311–313 contributes to the substrate binding site; the sequence is ESQ. D492 and G529 together coordinate ATP. N530 lines the Mg(2+) pocket. Position 532 (S532) interacts with substrate.

Belongs to the FGAMS family. Monomer. Part of the FGAM synthase complex composed of 1 PurL, 1 PurQ and 2 PurS subunits.

The protein localises to the cytoplasm. The enzyme catalyses N(2)-formyl-N(1)-(5-phospho-beta-D-ribosyl)glycinamide + L-glutamine + ATP + H2O = 2-formamido-N(1)-(5-O-phospho-beta-D-ribosyl)acetamidine + L-glutamate + ADP + phosphate + H(+). It functions in the pathway purine metabolism; IMP biosynthesis via de novo pathway; 5-amino-1-(5-phospho-D-ribosyl)imidazole from N(2)-formyl-N(1)-(5-phospho-D-ribosyl)glycinamide: step 1/2. Functionally, part of the phosphoribosylformylglycinamidine synthase complex involved in the purines biosynthetic pathway. Catalyzes the ATP-dependent conversion of formylglycinamide ribonucleotide (FGAR) and glutamine to yield formylglycinamidine ribonucleotide (FGAM) and glutamate. The FGAM synthase complex is composed of three subunits. PurQ produces an ammonia molecule by converting glutamine to glutamate. PurL transfers the ammonia molecule to FGAR to form FGAM in an ATP-dependent manner. PurS interacts with PurQ and PurL and is thought to assist in the transfer of the ammonia molecule from PurQ to PurL. This chain is Phosphoribosylformylglycinamidine synthase subunit PurL, found in Bradyrhizobium diazoefficiens (strain JCM 10833 / BCRC 13528 / IAM 13628 / NBRC 14792 / USDA 110).